We begin with the raw amino-acid sequence, 1025 residues long: Serine/threonine-protein kinase TAO2 (1025 aa).

Residues 28 to 281 (FADLREIGHG…SDMLLKHRFL (254 aa)) enclose the Protein kinase domain. Residues 34–42 (IGHGSFGAV) and Lys-57 contribute to the ATP site. Asp-151 (proton acceptor) is an active-site residue. Over residues 349–373 (ESSQSVPSMSISASSQSSSVNSLAD) the composition is skewed to low complexity. The tract at residues 349 to 377 (ESSQSVPSMSISASSQSSSVNSLADASDD) is disordered. Coiled-coil stretches lie at residues 457–650 (SALR…ECAM) and 755–876 (ILKR…EIEA). Disordered stretches follow at residues 899 to 930 (FNQG…QNTG) and 945 to 1025 (SASW…LSYS). The segment covering 905–914 (APPPGWPSRP) has biased composition (pro residues). Over residues 947 to 986 (SWGLHPPGSSSSLSALPSSSSSSSSSPSSSSGGRPGLLLL) the composition is skewed to low complexity. A compositionally biased stretch (polar residues) spans 1007-1025 (SRSTSVTSQLSNGSHLSYS).

This sequence belongs to the protein kinase superfamily. STE Ser/Thr protein kinase family. STE20 subfamily. It depends on Mg(2+) as a cofactor.

The catalysed reaction is L-seryl-[protein] + ATP = O-phospho-L-seryl-[protein] + ADP + H(+). It catalyses the reaction L-threonyl-[protein] + ATP = O-phospho-L-threonyl-[protein] + ADP + H(+). Functionally, serine/threonine-protein kinase involved in different processes such as apoptotic morphological changes, MAPK8/JNK and MAPK14/p38 MAPK signaling pathway. Its function is as follows. Activates the JNK MAP kinase pathway. The polypeptide is Serine/threonine-protein kinase TAO2 (taok2) (Xenopus laevis (African clawed frog)).